The chain runs to 352 residues: Lipase chaperone (352 aa).

A helical membrane pass occupies residues 7–28; that stretch reads LSLVAVVVAGGLTLYWRWPAAV.

Belongs to the lipase chaperone family.

Its subcellular location is the cell inner membrane. Its function is as follows. May be involved in the folding of the extracellular lipase during its passage through the periplasm. This is Lipase chaperone (lifO) from Pseudomonas wisconsinensis.